The sequence spans 319 residues: MSLSKCFKNSIYPSINLPLTLSLLEEWCLIYICGIDSKKHLQNQFTIDINCLKKEEYKLCAHCNFNGKVWATMFIFHYKKGFAYIIRKSIAKIQIKELKKYAIFSKVEIRELDDIYLFGLSGFNAKFFLSKNFVDIPNKNCSLISNQDRTILWFSEPCERFLLVLSLKDLLLLKRKENEITLLNNSKQWLLFDIEAGFPIIDKQTSQKFLPQSINLILLQAVSFDKGCYYGQETIARVFYKNLNKYSLYLLSSKGNINPKIGSIIEMKKEEKWYRIGFLLAIVHVEFNRTVIQAVLNKSINIQNIFRIYEFKNIFLIKN.

The folate site is built by Trp27 and Trp189.

This sequence belongs to the tRNA-modifying YgfZ family.

The protein resides in the cytoplasm. In terms of biological role, folate-binding protein involved in regulating the level of ATP-DnaA and in the modification of some tRNAs. It is probably a key factor in regulatory networks that act via tRNA modification, such as initiation of chromosomal replication. This chain is tRNA-modifying protein YgfZ, found in Buchnera aphidicola subsp. Schizaphis graminum (strain Sg).